Reading from the N-terminus, the 285-residue chain is tRNA-cytidine(32) 2-sulfurtransferase (285 aa).

A PP-loop motif motif is present at residues 48-53 (SGGKDS). The [4Fe-4S] cluster site is built by Cys-122, Cys-125, and Cys-213.

Belongs to the TtcA family. Homodimer. It depends on Mg(2+) as a cofactor. [4Fe-4S] cluster is required as a cofactor.

The protein localises to the cytoplasm. It carries out the reaction cytidine(32) in tRNA + S-sulfanyl-L-cysteinyl-[cysteine desulfurase] + AH2 + ATP = 2-thiocytidine(32) in tRNA + L-cysteinyl-[cysteine desulfurase] + A + AMP + diphosphate + H(+). The protein operates within tRNA modification. Its function is as follows. Catalyzes the ATP-dependent 2-thiolation of cytidine in position 32 of tRNA, to form 2-thiocytidine (s(2)C32). The sulfur atoms are provided by the cysteine/cysteine desulfurase (IscS) system. The protein is tRNA-cytidine(32) 2-sulfurtransferase of Cytophaga hutchinsonii (strain ATCC 33406 / DSM 1761 / CIP 103989 / NBRC 15051 / NCIMB 9469 / D465).